An 86-amino-acid chain; its full sequence is Defensin-like SRCA-homolog protein (86 aa).

Positions 1–26 (MRCVVLFMVSCLLIVLLINHFEEVEA) are cleaved as a signal peptide. Cystine bridges form between Cys32/Cys84, Cys42/Cys70, Cys52/Cys79, and Cys68/Cys81.

The protein belongs to the DEFL family.

Its subcellular location is the secreted. In terms of biological role, involved in male-mediated self-incompatibility. This chain is Defensin-like SRCA-homolog protein (SCR37), found in Arabidopsis lyrata (Lyre-leaved rock-cress).